A 359-amino-acid polypeptide reads, in one-letter code: Opine dehydrogenase (359 aa).

This sequence belongs to the lysopine/nopaline/octopine/opine/vitopine dehydrogenases family. In terms of assembly, homodimer.

The catalysed reaction is (2S)-2-[(R)-1-carboxyethylamino]pentanoate + NAD(+) + H2O = L-2-aminopentanoate + pyruvate + NADH + H(+). In the forward direction also acts on secondary amine dicarboxylates such as N-(1-carboxyethyl)methionine and N-(1-carboxyethyl)phenylalanine. In the reverse direction, the enzyme also acts on neutral amino acids as an amino donor. They include L-amino acids such as 2-aminopentanoic acid, 2-aminobutyric acid, 2-aminohexanoic acid, 3-chloroalanine, O-acetylserine, methionine, isoleucine, valine, phenylalanine, leucine and alanine. This is Opine dehydrogenase (odh) from Arthrobacter sp. (strain 1C).